We begin with the raw amino-acid sequence, 62 residues long: Arabinogalactan protein 40 (62 aa).

A signal peptide spans 1–22 (MEMKNIFVALFISAVLVSSVSA). 4-hydroxyproline occurs at positions 28, 30, and 32. O-linked (Ara...) hydroxyproline glycans are attached at residues Pro-28, Pro-30, and Pro-32. Ser-35 carries the GPI-anchor amidated serine lipid modification. Residues 36-62 (SASTVAFPVVGSIVAASLSAFLALLLQ) constitute a propeptide, removed in mature form.

Belongs to the AG-peptide AGP family. Post-translationally, contains 4-hydroxyproline; hydroxylated on Pro-28, Pro-30 and Pro-32. O-glycosylated on hydroxyprolines; noncontiguous hydroxylproline residues are glycosylated with arabinogalactan.

It localises to the cell membrane. Proteoglycan that seems to be implicated in diverse developmental roles such as differentiation, cell-cell recognition, embryogenesis and programmed cell death. In Arabidopsis thaliana (Mouse-ear cress), this protein is Arabinogalactan protein 40.